Here is a 698-residue protein sequence, read N- to C-terminus: Polyribonucleotide nucleotidyltransferase (698 aa).

Residues aspartate 490 and aspartate 496 each contribute to the Mg(2+) site. The KH domain occupies 557–616 (PKVVTMTIKPDKIRDVIGPGGKKINEIIDETGVKLDIEQDGTIFIGAVDQAMINRAREII). The 69-residue stretch at 626–694 (GQTYQATVKR…KQGRVNASHR (69 aa)) folds into the S1 motif domain.

The protein belongs to the polyribonucleotide nucleotidyltransferase family. It depends on Mg(2+) as a cofactor.

It is found in the cytoplasm. It catalyses the reaction RNA(n+1) + phosphate = RNA(n) + a ribonucleoside 5'-diphosphate. Its function is as follows. Involved in mRNA degradation. Catalyzes the phosphorolysis of single-stranded polyribonucleotides processively in the 3'- to 5'-direction. The chain is Polyribonucleotide nucleotidyltransferase from Staphylococcus aureus (strain bovine RF122 / ET3-1).